The chain runs to 517 residues: Peptide chain release factor 3 (517 aa).

The tr-type G domain occupies 9 to 269 (AKRRTFAIIS…DFVEHAPAPR (261 aa)). GTP is bound by residues 18-25 (SHPDAGKT), 86-90 (DTPGH), and 140-143 (NKLD).

It belongs to the TRAFAC class translation factor GTPase superfamily. Classic translation factor GTPase family. PrfC subfamily.

It localises to the cytoplasm. In terms of biological role, increases the formation of ribosomal termination complexes and stimulates activities of RF-1 and RF-2. It binds guanine nucleotides and has strong preference for UGA stop codons. It may interact directly with the ribosome. The stimulation of RF-1 and RF-2 is significantly reduced by GTP and GDP, but not by GMP. In Halorhodospira halophila (strain DSM 244 / SL1) (Ectothiorhodospira halophila (strain DSM 244 / SL1)), this protein is Peptide chain release factor 3.